A 1024-amino-acid chain; its full sequence is Beta-galactosidase (1024 aa).

Substrate contacts are provided by Asn-103 and Asp-202. Asp-202 lines the Na(+) pocket. Positions 417, 419, and 462 each coordinate Mg(2+). Substrate-binding positions include Glu-462 and 538 to 541; that span reads EYAH. Residue Glu-462 is the Proton donor of the active site. The active-site Nucleophile is the Glu-538. Position 598 (Asn-598) interacts with Mg(2+). Na(+)-binding residues include Phe-602 and Asn-605. Substrate contacts are provided by Asn-605 and Trp-1000.

This sequence belongs to the glycosyl hydrolase 2 family. In terms of assembly, homotetramer. It depends on Mg(2+) as a cofactor. Requires Na(+) as cofactor.

The catalysed reaction is Hydrolysis of terminal non-reducing beta-D-galactose residues in beta-D-galactosides.. The polypeptide is Beta-galactosidase (Escherichia coli O9:H4 (strain HS)).